The following is a 434-amino-acid chain: Putative magnesium transporter MRS2-D (434 aa).

2 disordered regions span residues alanine 126–alanine 171 and glutamate 279–glycine 311. Residues glutamate 279 to glutamate 291 are compositionally biased toward basic and acidic residues. 2 helical membrane passes run glycine 367 to phenylalanine 387 and phenylalanine 405 to leucine 425.

It belongs to the CorA metal ion transporter (MIT) (TC 1.A.35.5) family.

It localises to the membrane. In terms of biological role, putative magnesium transporter. This is Putative magnesium transporter MRS2-D (MRS2-D) from Oryza sativa subsp. japonica (Rice).